The following is a 320-amino-acid chain: Putative GDP-polyphosphate phosphotransferase PKK2A (320 aa).

Disordered regions lie at residues 1–21 (MRKK…PKLD), 246–267 (RPLP…PPRD), and 281–320 (EERI…KSKK). Over residues 12-21 (DFRKNPPKLD) the composition is skewed to basic and acidic residues. The segment covering 281–290 (EERIKKEEKA) has biased composition (basic and acidic residues).

Belongs to the polyphosphate kinase 2 (PPK2) family. Class I subfamily.

The enzyme catalyses [phosphate](n) + GTP = [phosphate](n+1) + GDP. This is Putative GDP-polyphosphate phosphotransferase PKK2A from Corynebacterium glutamicum (strain ATCC 13032 / DSM 20300 / JCM 1318 / BCRC 11384 / CCUG 27702 / LMG 3730 / NBRC 12168 / NCIMB 10025 / NRRL B-2784 / 534).